Consider the following 611-residue polypeptide: BTB/POZ domain-containing protein 9 (611 aa).

The 69-residue stretch at 36–104 (GDVTFVVEKK…IYTGRATLTD (69 aa)) folds into the BTB domain. The BACK domain maps to 142-240 (VCMTFDVASL…SLTELLNVVR (99 aa)). The disordered stretch occupies residues 560 to 611 (QSAQKDSSDEPGTGGASAAGQQLDPHALQAPSGSSLPSSPGSNSRSPNRQHQ). Residues 586-611 (ALQAPSGSSLPSSPGSNSRSPNRQHQ) are compositionally biased toward low complexity.

This Bos taurus (Bovine) protein is BTB/POZ domain-containing protein 9 (BTBD9).